Here is a 137-residue protein sequence, read N- to C-terminus: Actin-depolymerizing factor 12 (137 aa).

A Phosphoserine modification is found at S6. The ADF-H domain maps to 7 to 137 (GMAVEDECKL…SLDIIKSRAL (131 aa)).

It belongs to the actin-binding proteins ADF family. In terms of tissue distribution, specifically expressed in pollen.

The protein localises to the cytoplasm. It localises to the cytoskeleton. In terms of biological role, actin-depolymerizing protein. Severs actin filaments (F-actin) and binds to actin monomers. This is Actin-depolymerizing factor 12 from Arabidopsis thaliana (Mouse-ear cress).